A 232-amino-acid chain; its full sequence is Dehydrin DHN2 (232 aa).

Residues Met1–Thr12 are compositionally biased toward polar residues. Disordered stretches follow at residues Met1 to Thr92, Pro131 to Gly156, and Pro173 to His232. The span at Thr73 to Gly82 shows a compositional bias: gly residues. Residues Pro131–Thr140 are compositionally biased toward basic and acidic residues. Residues Thr143–Gly156 are compositionally biased toward gly residues. Positions Tyr200–Leu223 are enriched in basic and acidic residues.

Belongs to the plant dehydrin family.

This Pisum sativum (Garden pea) protein is Dehydrin DHN2 (DHN2).